The primary structure comprises 434 residues: GTPase Obg (434 aa).

The region spanning 1 to 158 (MFLDTAKIKV…RELQLELKIL (158 aa)) is the Obg domain. An OBG-type G domain is found at 159 to 336 (ADVGLVGFPS…LLDATAELLD (178 aa)). GTP-binding positions include 165 to 172 (GFPSVGKS), 190 to 194 (FTTIV), 212 to 215 (DLPG), 282 to 285 (NKMD), and 317 to 319 (SGL). Positions 172 and 192 each coordinate Mg(2+). One can recognise an OCT domain in the interval 356–434 (GFDEEEKAFE…IGKFEFEFVD (79 aa)).

The protein belongs to the TRAFAC class OBG-HflX-like GTPase superfamily. OBG GTPase family. As to quaternary structure, monomer. Requires Mg(2+) as cofactor.

The protein localises to the cytoplasm. An essential GTPase which binds GTP, GDP and possibly (p)ppGpp with moderate affinity, with high nucleotide exchange rates and a fairly low GTP hydrolysis rate. Plays a role in control of the cell cycle, stress response, ribosome biogenesis and in those bacteria that undergo differentiation, in morphogenesis control. The chain is GTPase Obg from Streptococcus pneumoniae serotype 19F (strain G54).